We begin with the raw amino-acid sequence, 448 residues long: Beta-glucosidase A (448 aa).

The active-site Proton donor is Glu-166. The active-site Nucleophile is Glu-352.

It belongs to the glycosyl hydrolase 1 family. In terms of assembly, homooctamer.

The enzyme catalyses Hydrolysis of terminal, non-reducing beta-D-glucosyl residues with release of beta-D-glucose.. In terms of biological role, bglA is intracellular and cleaves cellobiose probably through inorganic phosphate mediated hydrolysis. This chain is Beta-glucosidase A (bglA), found in Paenibacillus polymyxa (Bacillus polymyxa).